The sequence spans 206 residues: Geminin (206 aa).

A compositionally biased stretch (polar residues) spans 1 to 18 (MNLSMKQKQEGAQENVKN). A disordered region spans residues 1-42 (MNLSMKQKQEGAQENVKNSPVPRRTLKMIQPSADGSLVGREN). Lys27 bears the N6-acetyllysine mark. Residues Ser36, Ser63, and Ser64 each carry the phosphoserine modification. The tract at residues 79–158 (TQEAFDLISK…AEVIERLSNE (80 aa)) is necessary and sufficient for interaction with IDAS and CDT1. Residues 91–141 (PSSQYWKEVAEQRRKALYEALKENEKLHKEIEQKDSEIARLRKENKDLAEV) adopt a coiled-coil conformation. The interval 157 to 206 (NEPLDNFESPDSQEFDSEEEAVEYSELEDSGAGTCAEETVSSSTDARPCT) is disordered. A compositionally biased stretch (acidic residues) spans 167–185 (DSQEFDSEEEAVEYSELED). The segment at 167-187 (DSQEFDSEEEAVEYSELEDSG) is homeodomain binding. At Ser181 the chain carries Phosphoserine; by CK2. A compositionally biased stretch (polar residues) spans 195–206 (TVSSSTDARPCT).

The protein belongs to the geminin family. As to quaternary structure, homotetramer. Interacts with CDT1; this inhibits binding of the MCM complex to origins of replication. The complex with CDT1 exists in two forms, a 'permissive' heterotrimer and an 'inhibitory' heterohexamer. Interacts (via coiled-coil domain) with IDAS (via coiled-coil domain); this targets GMNN to the nucleus. The heterodimer formed by GMNN and MCIDAS has much lower affinity for CDT1 than the GMNN homodimer. Interacts with a subset of Hox proteins, affinity increasing from anterior to posterior types, the strongest interaction being with HOXB1, HOXC9 and HOXD10. Interacts with LRWD1 from G1/S to mitosis. Phosphorylated during mitosis. Phosphorylation at Ser-181 by CK2 results in enhanced binding to Hox proteins and more potent inhibitory effect on Hox transcriptional activity.

Its subcellular location is the cytoplasm. It localises to the nucleus. Inhibits DNA replication by preventing the incorporation of MCM complex into pre-replication complex (pre-RC). It is degraded during the mitotic phase of the cell cycle. Its destruction at the metaphase-anaphase transition permits replication in the succeeding cell cycle. Inhibits histone acetyltransferase activity of KAT7/HBO1 in a CDT1-dependent manner, inhibiting histone H4 acetylation and DNA replication licensing. Inhibits the transcriptional activity of a subset of Hox proteins, enrolling them in cell proliferative control. The sequence is that of Geminin (Gmnn) from Mus musculus (Mouse).